A 429-amino-acid chain; its full sequence is Ribosomal RNA small subunit methyltransferase B (429 aa).

S-adenosyl-L-methionine-binding positions include 254–260 (CSAPGGK), Asp277, Asp303, and Asp322. Residue Cys375 is the Nucleophile of the active site. Residues 397–419 (ALSETGTPDQPGQQNLPGGEEGD) form a disordered region. A compositionally biased stretch (polar residues) spans 400 to 412 (ETGTPDQPGQQNL).

It belongs to the class I-like SAM-binding methyltransferase superfamily. RsmB/NOP family.

It localises to the cytoplasm. It carries out the reaction cytidine(967) in 16S rRNA + S-adenosyl-L-methionine = 5-methylcytidine(967) in 16S rRNA + S-adenosyl-L-homocysteine + H(+). Functionally, specifically methylates the cytosine at position 967 (m5C967) of 16S rRNA. The polypeptide is Ribosomal RNA small subunit methyltransferase B (Salmonella dublin (strain CT_02021853)).